The following is a 421-amino-acid chain: Histidine--tRNA ligase (421 aa).

This sequence belongs to the class-II aminoacyl-tRNA synthetase family. As to quaternary structure, homodimer.

Its subcellular location is the cytoplasm. It carries out the reaction tRNA(His) + L-histidine + ATP = L-histidyl-tRNA(His) + AMP + diphosphate + H(+). The chain is Histidine--tRNA ligase from Francisella tularensis subsp. holarctica (strain LVS).